A 340-amino-acid chain; its full sequence is Glutaminase 2 (340 aa).

Residues S89, N140, N191, Y215, and Y267 each coordinate substrate.

The protein belongs to the glutaminase family. In terms of assembly, homotetramer.

The enzyme catalyses L-glutamine + H2O = L-glutamate + NH4(+). In Yersinia pestis, this protein is Glutaminase 2.